A 118-amino-acid chain; its full sequence is Basic phospholipase A2 3 (118 aa).

Intrachain disulfides connect C11–C71, C27–C117, C29–C45, C44–C98, C51–C91, C60–C84, and C78–C89. Y28, G30, and G32 together coordinate Ca(2+). H48 is an active-site residue. Ca(2+) is bound at residue D49. D92 is a catalytic residue.

The protein belongs to the phospholipase A2 family. Group I subfamily. D49 sub-subfamily. Monomer. The cofactor is Ca(2+). As to expression, expressed by the venom gland.

It is found in the secreted. The catalysed reaction is a 1,2-diacyl-sn-glycero-3-phosphocholine + H2O = a 1-acyl-sn-glycero-3-phosphocholine + a fatty acid + H(+). Functionally, PLA2 catalyzes the calcium-dependent hydrolysis of the 2-acyl groups in 3-sn-phosphoglycerides. The polypeptide is Basic phospholipase A2 3 (Laticauda semifasciata (Black-banded sea krait)).